A 59-amino-acid polypeptide reads, in one-letter code: Large ribosomal subunit protein uL30 (59 aa).

This sequence belongs to the universal ribosomal protein uL30 family. As to quaternary structure, part of the 50S ribosomal subunit.

The protein is Large ribosomal subunit protein uL30 of Brachyspira hyodysenteriae (strain ATCC 49526 / WA1).